Consider the following 23-residue polypeptide: Phallacidin proprotein (23 aa).

A propeptide is located at residue Pro1. A cross-link (cyclopeptide (Ala-Pro)) is located at residues 2-8; it reads AWLVDCP. The segment at residues 3–7 is a cross-link (2'-cysteinyl-6'-hydroxytryptophan sulfoxide (Trp-Cys)); that stretch reads WLVDC. Positions 9-23 are excised as a propeptide; sequence CVGDDISRLLTRGEK.

Belongs to the MSDIN fungal toxin family. Post-translationally, processed by the macrocyclase-peptidase enzyme POPB to yield a toxic cyclic heptapeptide. POPB first removes 10 residues from the N-terminus. Conformational trapping of the remaining peptide forces the enzyme to release this intermediate rather than proceed to macrocyclization. The enzyme rebinds the remaining peptide in a different conformation and catalyzes macrocyclization of the N-terminal 7 residues.

Its function is as follows. Major toxin that belongs to the bicyclic heptapeptides called phallotoxins. Although structurally related to amatoxins, phallotoxins have a different mode of action, which is the stabilization of F-actin. Phallotoxins are poisonous when administered parenterally, but not orally because of poor absorption. This chain is Phallacidin proprotein, found in Amanita rimosa.